We begin with the raw amino-acid sequence, 351 residues long: Tropomodulin-2 (351 aa).

Position 25 is a phosphoserine (Ser-25).

It belongs to the tropomodulin family. Binds to the N-terminus of tropomyosin and to actin. Neuronal-tissue specific.

The protein localises to the cytoplasm. The protein resides in the cytoskeleton. Functionally, blocks the elongation and depolymerization of the actin filaments at the pointed end. The Tmod/TM complex contributes to the formation of the short actin protofilament, which in turn defines the geometry of the membrane skeleton. This Mus musculus (Mouse) protein is Tropomodulin-2 (Tmod2).